Consider the following 433-residue polypeptide: Alpha-(1,3)-fucosyltransferase 4 (433 aa).

The interval 1-20 (MAPAGRKLQHESRCRPSRPV) is disordered. The Cytoplasmic segment spans residues 1 to 54 (MAPAGRKLQHESRCRPSRPVDAWRAAATTRGRCMGTPGARRTARRGGWGLPRTS). The helical; Signal-anchor for type II membrane protein transmembrane segment at 55 to 74 (SGLAAAGLLCTALTACLCWG) threads the bilayer. Topologically, residues 75-433 (QLPPLPWASP…IHNLADWFQR (359 aa)) are lumenal. N-linked (GlcNAc...) asparagine glycans are attached at residues asparagine 117 and asparagine 218.

Belongs to the glycosyltransferase 10 family. In terms of tissue distribution, in adult, highest expression in spleen, testis, brain, lung, kidney and skeletal muscle and to a lesser extent in liver and heart.

It is found in the golgi apparatus. The protein localises to the golgi stack membrane. It carries out the reaction a beta-D-galactosyl-(1-&gt;4)-N-acetyl-beta-D-glucosaminyl derivative + GDP-beta-L-fucose = a beta-D-galactosyl-(1-&gt;4)-[alpha-L-fucosyl-(1-&gt;3)]-N-acetyl-beta-D-glucosaminyl derivative + GDP + H(+). The catalysed reaction is an N-acetyl-alpha-neuraminyl-(2-&gt;3)-beta-D-galactosyl-(1-&gt;4)-N-acetyl-beta-D-glucosaminyl derivative + GDP-beta-L-fucose = an alpha-Neu5Ac-(2-&gt;3)-beta-D-Gal-(1-&gt;4)-[alpha-L-Fuc-(1-&gt;3)]-beta-D-GlcNAc derivative + GDP + H(+). The enzyme catalyses an alpha-Neu5Ac-(2-&gt;3)-beta-D-Gal-(1-&gt;4)-beta-D-GlcNAc-(1-&gt;3)-beta-D-Gal-(1-&gt;4)-beta-D-GlcNAc derivative + GDP-beta-L-fucose = an alpha-Neu5Ac-(2-&gt;3)-beta-D-Gal-(1-&gt;4)-beta-D-GlcNAc-(1-&gt;3)-beta-D-Gal-(1-&gt;4)-[alpha-L-Fuc-(1-&gt;3)]-beta-D-GlcNAc derivative + GDP + H(+). It catalyses the reaction an alpha-Neu5Ac-(2-&gt;3)-beta-D-Gal-(1-&gt;4)-beta-D-GlcNAc6S derivative + GDP-beta-L-fucose = an alpha-Neu5Ac-(2-&gt;3)-beta-D-Gal-(1-&gt;4)-[alpha-L-Fuc-(1-&gt;3)]-beta-D-GlcNAc6S derivative + GDP + H(+). The protein operates within protein modification; protein glycosylation. Catalyzes alpha(1-&gt;3) linkage of fucosyl moiety transferred from GDP-beta-L-fucose to N-acetyl glucosamine (GlcNAc) within type 2 lactosamine (LacNAc, Gal-beta(1-&gt;4)GlcNAc) glycan attached to N- or O-linked glycoproteins. Robustly fucosylates nonsialylated distal LacNAc unit of the polylactosamine chain to form Lewis X antigen (CD15), a glycan determinant known to mediate important cellular functions in development and immunity. Fucosylates with lower efficiency sialylated LacNAc acceptors to form sialyl Lewis X and 6-sulfo sialyl Lewis X determinants that serve as recognition epitopes for C-type lectins. Together with FUT7 contributes to SELE, SELL and SELP selectin ligand biosynthesis and selectin-dependent lymphocyte homing, leukocyte migration and blood leukocyte homeostasis. In a cell type specific manner, may also fucosylate the internal LacNAc unit of the polylactosamine chain to form VIM-2 antigen that serves as recognition epitope for SELE. In Rattus norvegicus (Rat), this protein is Alpha-(1,3)-fucosyltransferase 4 (Fut4).